Reading from the N-terminus, the 136-residue chain is Small integral membrane protein 23 (136 aa).

Residues 1–31 (MTIQKTGCRGREAAEVVEQRRRSHHCDDRKQ) lie on the Cytoplasmic side of the membrane. The chain crosses the membrane as a helical; Signal-anchor for type II membrane protein span at residues 32 to 52 (TLLALLILVLYLGMGISGSSW). The Extracellular portion of the chain corresponds to 53–136 (EVSGQTKDCN…DLRPEDPCFT (84 aa)). Positions 92 to 124 (LKINLHGFLEKLEKEVRELEQLVRDLEFWLDAL) form a coiled coil.

The protein resides in the membrane. The protein is Small integral membrane protein 23 (Smim23) of Mus musculus (Mouse).